Reading from the N-terminus, the 336-residue chain is Dihydroorotate dehydrogenase (quinone) (336 aa).

FMN is bound by residues 62 to 66 and T86; that span reads AGLDK. K66 is a substrate binding site. Position 111-115 (111-115) interacts with substrate; that stretch reads NRMGF. FMN is bound by residues N139 and N172. Position 172 (N172) interacts with substrate. The active-site Nucleophile is the S175. N177 is a substrate binding site. FMN-binding residues include K217 and T245. 246–247 contributes to the substrate binding site; sequence NT. FMN contacts are provided by residues G268, G297, and 318-319; that span reads YS.

It belongs to the dihydroorotate dehydrogenase family. Type 2 subfamily. As to quaternary structure, monomer. The cofactor is FMN.

The protein resides in the cell membrane. The enzyme catalyses (S)-dihydroorotate + a quinone = orotate + a quinol. It participates in pyrimidine metabolism; UMP biosynthesis via de novo pathway; orotate from (S)-dihydroorotate (quinone route): step 1/1. Functionally, catalyzes the conversion of dihydroorotate to orotate with quinone as electron acceptor. The sequence is that of Dihydroorotate dehydrogenase (quinone) from Baumannia cicadellinicola subsp. Homalodisca coagulata.